Reading from the N-terminus, the 552-residue chain is Urocanate hydratase (552 aa).

NAD(+) contacts are provided by residues 49–50 (GG), glutamine 127, 173–175 (GMG), aspartate 193, 239–240 (NA), 260–264 (QTSAH), 270–271 (YI), and tyrosine 319. Cysteine 407 is a catalytic residue. Glycine 489 lines the NAD(+) pocket.

The protein belongs to the urocanase family. NAD(+) is required as a cofactor.

Its subcellular location is the cytoplasm. It carries out the reaction 4-imidazolone-5-propanoate = trans-urocanate + H2O. The protein operates within amino-acid degradation; L-histidine degradation into L-glutamate; N-formimidoyl-L-glutamate from L-histidine: step 2/3. Functionally, catalyzes the conversion of urocanate to 4-imidazolone-5-propionate. This Bacillus cereus (strain 03BB102) protein is Urocanate hydratase.